Reading from the N-terminus, the 190-residue chain is Protein LZIC (190 aa).

A coiled-coil region spans residues 6–64 (TTETSKLKQNLEEQLDRLMQQLQDLEECREELDADEYEETKKETLEQLSEINDSLKKIM).

This sequence belongs to the CTNNBIP1 family. Does not interact with CTNNB1.

This is Protein LZIC (LZIC) from Gallus gallus (Chicken).